A 380-amino-acid chain; its full sequence is Cytochrome b (380 aa).

Helical transmembrane passes span 34–54, 78–99, 114–134, and 179–199; these read FGWLLGVCVIVQIATGLFLAM, WLLRNLHANGASFFFICIYFHI, WNIGVILLFLVMATAFVGYVL, and FFTFHFILPFIIAAMSMIHLL. Heme b contacts are provided by His-84 and His-98. The heme b site is built by His-183 and His-197. A ubiquinone is bound at residue His-202. 4 helical membrane-spanning segments follow: residues 227–247, 289–309, 321–341, and 348–368; these read FKDLLGFIILLGALAILSTFA, LGGVLALLLSIMVLFLMPIIH, AAKAFFWALIANTIILTWIGG, and FISIGQIASGLYFLIFVLIIP.

The protein belongs to the cytochrome b family. In terms of assembly, the cytochrome bc1 complex contains 3 respiratory subunits (MT-CYB, CYC1 and UQCRFS1), 2 core proteins (UQCRC1 and UQCRC2) and probably 6 low-molecular weight proteins. Heme b serves as cofactor.

The protein localises to the mitochondrion inner membrane. Component of the ubiquinol-cytochrome c reductase complex (complex III or cytochrome b-c1 complex) that is part of the mitochondrial respiratory chain. The b-c1 complex mediates electron transfer from ubiquinol to cytochrome c. Contributes to the generation of a proton gradient across the mitochondrial membrane that is then used for ATP synthesis. The chain is Cytochrome b (mt-cyb) from Rana dybowskii (Dybovsky's frog).